A 155-amino-acid chain; its full sequence is 3-hydroxyacyl-[acyl-carrier-protein] dehydratase FabZ (155 aa).

Histidine 57 is a catalytic residue.

This sequence belongs to the thioester dehydratase family. FabZ subfamily.

The protein resides in the cytoplasm. The enzyme catalyses a (3R)-hydroxyacyl-[ACP] = a (2E)-enoyl-[ACP] + H2O. In terms of biological role, involved in unsaturated fatty acids biosynthesis. Catalyzes the dehydration of short chain beta-hydroxyacyl-ACPs and long chain saturated and unsaturated beta-hydroxyacyl-ACPs. The polypeptide is 3-hydroxyacyl-[acyl-carrier-protein] dehydratase FabZ (Sorangium cellulosum (strain So ce56) (Polyangium cellulosum (strain So ce56))).